The sequence spans 350 residues: GTPase Obg (350 aa).

The region spanning 1-158 (MFIDSVKITL…RLVRLELKLI (158 aa)) is the Obg domain. One can recognise an OBG-type G domain in the interval 159–339 (ADVGLVGFPN…LKFMLLEEIK (181 aa)). GTP-binding positions include 165–172 (GFPNVGKS), 190–194 (FTTLT), 212–215 (DIPG), 280–283 (SKSD), and 320–322 (SSL). Residues S172 and T192 each coordinate Mg(2+).

It belongs to the TRAFAC class OBG-HflX-like GTPase superfamily. OBG GTPase family. Monomer. The cofactor is Mg(2+).

The protein localises to the cytoplasm. Its function is as follows. An essential GTPase which binds GTP, GDP and possibly (p)ppGpp with moderate affinity, with high nucleotide exchange rates and a fairly low GTP hydrolysis rate. Plays a role in control of the cell cycle, stress response, ribosome biogenesis and in those bacteria that undergo differentiation, in morphogenesis control. The sequence is that of GTPase Obg from Campylobacter jejuni (strain RM1221).